The chain runs to 377 residues: uncharacterized protein (377 aa).

2 stretches are compositionally biased toward polar residues: residues 1–11 (MSSIQGTSGSS) and 31–43 (PSGQ…AVGK). Disordered stretches follow at residues 1–43 (MSSI…AVGK), 109–141 (SSEE…IARN), and 328–377 (SSSP…RGFQ). Residues 334–345 (EDPRSLRDRLRD) show a composition bias toward basic and acidic residues.

Belongs to the chlamydial CPn_0499/CT_392/TC_0671 family.

This is an uncharacterized protein from Chlamydia trachomatis serovar D (strain ATCC VR-885 / DSM 19411 / UW-3/Cx).